We begin with the raw amino-acid sequence, 304 residues long: Homoserine kinase (304 aa).

Residue 91 to 101 (PLGKGMGSSAA) participates in ATP binding.

Belongs to the GHMP kinase family. Homoserine kinase subfamily.

The protein localises to the cytoplasm. The catalysed reaction is L-homoserine + ATP = O-phospho-L-homoserine + ADP + H(+). It functions in the pathway amino-acid biosynthesis; L-threonine biosynthesis; L-threonine from L-aspartate: step 4/5. Its function is as follows. Catalyzes the ATP-dependent phosphorylation of L-homoserine to L-homoserine phosphate. This chain is Homoserine kinase, found in Solibacter usitatus (strain Ellin6076).